Here is a 419-residue protein sequence, read N- to C-terminus: Adenylosuccinate synthetase (419 aa).

Residues 11-17 (GDEGKGK) and 39-41 (GHT) contribute to the GTP site. Residue aspartate 12 is the Proton acceptor of the active site. Mg(2+) contacts are provided by aspartate 12 and glycine 39. Residues 12–15 (DEGK), 37–40 (NAGH), threonine 129, arginine 143, asparagine 218, threonine 233, and arginine 297 each bind IMP. Histidine 40 functions as the Proton donor in the catalytic mechanism. Position 293–299 (293–299 (VTTGRKR)) interacts with substrate. GTP is bound by residues arginine 299, 325–327 (KLD), and 407–409 (GTG).

It belongs to the adenylosuccinate synthetase family. As to quaternary structure, homodimer. Mg(2+) is required as a cofactor.

Its subcellular location is the cytoplasm. The catalysed reaction is IMP + L-aspartate + GTP = N(6)-(1,2-dicarboxyethyl)-AMP + GDP + phosphate + 2 H(+). Its pathway is purine metabolism; AMP biosynthesis via de novo pathway; AMP from IMP: step 1/2. Plays an important role in the de novo pathway and in the salvage pathway of purine nucleotide biosynthesis. Catalyzes the first committed step in the biosynthesis of AMP from IMP. The protein is Adenylosuccinate synthetase of Coccidioides posadasii (strain C735) (Valley fever fungus).